A 914-amino-acid chain; its full sequence is Eukaryotic translation initiation factor 3 subunit C-like protein (914 aa).

A disordered region spans residues 1–44; that stretch reads MSRFFTTGSDSESESSLSGEELVTKPVGGNYGKQPLLLSEDEED. The segment covering 8–21 has biased composition (low complexity); that stretch reads GSDSESESSLSGEE. 7 positions are modified to phosphoserine: Ser-9, Ser-11, Ser-13, Ser-15, Ser-16, Ser-18, and Ser-39. Lys-99 is subject to N6-acetyllysine. Disordered regions lie at residues 157–302 and 523–543; these read TSYK…GGEW and QLTPPEGSSKSEQDQAENEGE. Ser-166, Ser-178, Ser-181, and Ser-182 each carry phosphoserine. Residues 166 to 190 are compositionally biased toward acidic residues; it reads SADEDAEKNEEDSEGSSDEDEDEDG. Basic and acidic residues predominate over residues 199-216; sequence KKSEAPSGESRKFLKKMD. The span at 217–232 shows a compositional bias: acidic residues; the sequence is DEDEDSEDSEDDEDWD. The segment covering 261 to 278 has biased composition (basic and acidic residues); it reads PTTDEDKKAAEKKREDKA. Residues 291–300 show a composition bias toward acidic residues; that stretch reads EEEEEDNEGG. Polar residues predominate over residues 523-532; that stretch reads QLTPPEGSSK. Thr-525 is subject to Phosphothreonine. At Lys-644 the chain carries N6-acetyllysine. A PCI domain is found at 674 to 850; it reads FHLHINLELL…QTVVMHRTEP (177 aa). Residues 886–914 form a disordered region; it reads FRDQKDGYRKNEGYMRRGGYRQQQSQTAY. The span at 887–900 shows a compositional bias: basic and acidic residues; sequence RDQKDGYRKNEGYM. The residue at position 910 (Ser-910) is a Phosphoserine.

This sequence belongs to the eIF-3 subunit C family. Component of the eukaryotic translation initiation factor 3 (eIF-3) complex, which is composed of 13 subunits: EIF3A, EIF3B, EIF3C, EIF3D, EIF3E, EIF3F, EIF3G, EIF3H, EIF3I, EIF3J, EIF3K, EIF3L and EIF3M. The eIF-3 complex appears to include 3 stable modules: module A is composed of EIF3A, EIF3B, EIF3G and EIF3I; module B is composed of EIF3F, EIF3H, and EIF3M; and module C is composed of EIF3C, EIF3D, EIF3E, EIF3K and EIF3L. EIF3C of module C binds EIF3B of module A and EIF3H of module B, thereby linking the three modules. EIF3J is a labile subunit that binds to the eIF-3 complex via EIF3B. The eIF-3 complex interacts with RPS6KB1 under conditions of nutrient depletion. Mitogenic stimulation leads to binding and activation of a complex composed of MTOR and RPTOR, leading to phosphorylation and release of RPS6KB1 and binding of EIF4B to eIF-3. In terms of processing, phosphorylated. Phosphorylation is enhanced upon serum stimulation.

It localises to the cytoplasm. Its function is as follows. Component of the eukaryotic translation initiation factor 3 (eIF-3) complex, which is required for several steps in the initiation of protein synthesis. The eIF-3 complex associates with the 40S ribosome and facilitates the recruitment of eIF-1, eIF-1A, eIF-2:GTP:methionyl-tRNAi and eIF-5 to form the 43S pre-initiation complex (43S PIC). The eIF-3 complex stimulates mRNA recruitment to the 43S PIC and scanning of the mRNA for AUG recognition. The eIF-3 complex is also required for disassembly and recycling of post-termination ribosomal complexes and subsequently prevents premature joining of the 40S and 60S ribosomal subunits prior to initiation. The eIF-3 complex specifically targets and initiates translation of a subset of mRNAs involved in cell proliferation, including cell cycling, differentiation and apoptosis, and uses different modes of RNA stem-loop binding to exert either translational activation or repression. This Homo sapiens (Human) protein is Eukaryotic translation initiation factor 3 subunit C-like protein (EIF3CL).